We begin with the raw amino-acid sequence, 278 residues long: Non-homologous end joining protein Ku (278 aa).

The Ku domain occupies 9–172; that stretch reads ISFGLVNIPV…MHFAQELVDV (164 aa). Residues 255-278 are disordered; sequence NQTGAGAKKKPAKTAKRGKSRKAA. Residues 261–278 show a composition bias toward basic residues; sequence AKKKPAKTAKRGKSRKAA.

This sequence belongs to the prokaryotic Ku family. Homodimer. Interacts with LigD.

With LigD forms a non-homologous end joining (NHEJ) DNA repair enzyme, which repairs dsDNA breaks with reduced fidelity. Binds linear dsDNA with 5'- and 3'- overhangs but not closed circular dsDNA nor ssDNA. Recruits and stimulates the ligase activity of LigD. The chain is Non-homologous end joining protein Ku from Opitutus terrae (strain DSM 11246 / JCM 15787 / PB90-1).